The sequence spans 122 residues: UPF0102 protein Gmet_2864 (122 aa).

Belongs to the UPF0102 family.

The protein is UPF0102 protein Gmet_2864 of Geobacter metallireducens (strain ATCC 53774 / DSM 7210 / GS-15).